A 211-amino-acid chain; its full sequence is Protein-L-isoaspartate O-methyltransferase (211 aa).

S62 is a catalytic residue.

This sequence belongs to the methyltransferase superfamily. L-isoaspartyl/D-aspartyl protein methyltransferase family.

The protein resides in the cytoplasm. It carries out the reaction [protein]-L-isoaspartate + S-adenosyl-L-methionine = [protein]-L-isoaspartate alpha-methyl ester + S-adenosyl-L-homocysteine. Its function is as follows. Catalyzes the methyl esterification of L-isoaspartyl residues in peptides and proteins that result from spontaneous decomposition of normal L-aspartyl and L-asparaginyl residues. It plays a role in the repair and/or degradation of damaged proteins. This chain is Protein-L-isoaspartate O-methyltransferase, found in Shewanella loihica (strain ATCC BAA-1088 / PV-4).